Reading from the N-terminus, the 470-residue chain is Probable glycosyltransferase At3g07620 (470 aa).

The Cytoplasmic portion of the chain corresponds to 1 to 7; the sequence is MRDYIPK. A helical; Signal-anchor membrane pass occupies residues 8-28; the sequence is YLNAFLLAFATFAVGFAIFIA. Residues 29–470 are Lumenal-facing; sequence KDSNSSSHLY…WLRRLNVKLL (442 aa). N-linked (GlcNAc...) asparagine glycosylation is found at Asn-32, Asn-73, Asn-105, Asn-236, Asn-274, and Asn-299.

It belongs to the glycosyltransferase 47 family.

The protein resides in the golgi apparatus membrane. Functionally, may be involved in cell wall biosynthesis. This Arabidopsis thaliana (Mouse-ear cress) protein is Probable glycosyltransferase At3g07620.